We begin with the raw amino-acid sequence, 355 residues long: 3-dehydroquinate synthase (355 aa).

Residues 71 to 76 (EGEERK), 105 to 109 (GVVGD), 129 to 130 (TS), Lys142, and Lys151 contribute to the NAD(+) site. Zn(2+) contacts are provided by Glu184, His246, and His263.

The protein belongs to the sugar phosphate cyclases superfamily. Dehydroquinate synthase family. Co(2+) is required as a cofactor. Zn(2+) serves as cofactor. Requires NAD(+) as cofactor.

The protein localises to the cytoplasm. The catalysed reaction is 7-phospho-2-dehydro-3-deoxy-D-arabino-heptonate = 3-dehydroquinate + phosphate. It participates in metabolic intermediate biosynthesis; chorismate biosynthesis; chorismate from D-erythrose 4-phosphate and phosphoenolpyruvate: step 2/7. Functionally, catalyzes the conversion of 3-deoxy-D-arabino-heptulosonate 7-phosphate (DAHP) to dehydroquinate (DHQ). The polypeptide is 3-dehydroquinate synthase (Streptococcus pneumoniae (strain Hungary19A-6)).